We begin with the raw amino-acid sequence, 99 residues long: Integration host factor subunit alpha (99 aa).

Positions 52-73 are disordered; sequence FGNFTLRDKPQRPGRNPKTGEE.

This sequence belongs to the bacterial histone-like protein family. In terms of assembly, heterodimer of an alpha and a beta chain.

This protein is one of the two subunits of integration host factor, a specific DNA-binding protein that functions in genetic recombination as well as in transcriptional and translational control. This is Integration host factor subunit alpha from Legionella pneumophila subsp. pneumophila (strain Philadelphia 1 / ATCC 33152 / DSM 7513).